Consider the following 977-residue polypeptide: Serine/threonine-protein kinase/endoribonuclease IRE1 (977 aa).

An N-terminal signal peptide occupies residues 1–18; the sequence is MPARRLLLLLTLLLPGLG. Topologically, residues 19-443 are lumenal; that stretch reads IFGSTSTVTL…EAPVDSMLKD (425 aa). Asn176 carries an N-linked (GlcNAc...) asparagine glycan. The span at 410 to 419 shows a compositional bias: polar residues; that stretch reads TSENAPTTVS. Residues 410 to 434 form a disordered region; that stretch reads TSENAPTTVSRDVEEKPAHAPARPE. A helical transmembrane segment spans residues 444 to 464; the sequence is MATIILSTFLLIGWVAFIITY. The Cytoplasmic segment spans residues 465–977; that stretch reads PLSMHQQQQL…PQPPVTPDAL (513 aa). The segment at 491–559 is disordered; the sequence is QQQQQLPFHP…PSLEQDDGDE (69 aa). The span at 513-552 shows a compositional bias: low complexity; the sequence is TSGPYSESSGTSSPSTSPRASNHSLCSGSSASKAGSSPSL. In terms of domain architecture, Protein kinase spans 571–832; the sequence is FCPKDVLGHG…AKHVLKHPFF (262 aa). Residues 577–585, Lys599, and 643–645 each bind ATP; these read LGHGAEGTI and ELC. Residue Asp688 is the Proton acceptor of the active site. Residues 690 to 693 and Asp711 contribute to the ATP site; that span reads KPHN. 2 positions are modified to phosphoserine: Ser724 and Ser729. A KEN domain is found at 835 to 963; the sequence is LEKQLQFFQD…ERLFQPYYFH (129 aa). Residues 906–907 are interacts with hydroxy-aryl-aldehyde inhibitors; it reads NK. The residue at position 973 (Thr973) is a Phosphothreonine.

This sequence belongs to the protein kinase superfamily. Ser/Thr protein kinase family. In terms of assembly, monomer. Homodimer; disulfide-linked; homodimerization takes place in response to endoplasmic reticulum stress and promotes activation of the kinase and endoribonuclease activities. Dimer formation is driven by hydrophobic interactions within the N-terminal luminal domains and stabilized by disulfide bridges. Interacts (via the luminal region) with DNAJB9/ERdj4; interaction takes place in unstressed cells and promotes recruitment of HSPA5/BiP. Interacts (via the luminal region) with HSPA5/BiP; HSPA5/BiP is a negative regulator of the unfolded protein response (UPR) that prevents homodimerization of ERN1/IRE1 and subsequent activation of the protein. Interaction with HSPA5 also competitively inhibits ERN1 interaction with MANF. Interacts with PDIA6, a negative regulator of the UPR; the interaction is direct and disrupts homodimerization. Interacts with DAB2IP (via PH domain); the interaction occurs in a endoplasmic reticulum stress-induced dependent manner and is required for subsequent recruitment of TRAF2 to ERN1/IRE1. Interacts with TAOK3 and TRAF2. Interacts with RNF13. Interacts with LACC1. Interacts (when unphosphorylated) with DDRGK1; interaction is dependent on UFM1 and takes place in response to endoplasmic reticulum stress, regulating ERN1/IRE1-alpha stability. Interacts (via N-terminus) with P4HB/PDIA1; the interaction is enhanced by phosphorylation of P4HB by FAM20C in response to endoplasmic reticulum stress and results in attenuation of ERN1 activity. Interacts with TMBIM6; this interaction inhibits ERN1 activity. Interacts (via luminal domain) with MANF (via C-terminus); the interaction is decreased in the presence of increasing concentrations of Ca(2+). Requires Mg(2+) as cofactor. Autophosphorylated following homodimerization. Autophosphorylation promotes activation of the endoribonuclease domain. In response to ER stress, phosphorylated at Ser-724, Ser-729 and possibly Ser-726; phosphorylation promotes oligomerization and endoribonuclease activity. Dephosphorylated at Ser-724, Ser-729 and possibly Ser-726 by RPAP2 to abort failed ER-stress adaptation and trigger apoptosis. Phosphorylated at Ser-724; in response to the ER stressor tunicamycin. Post-translationally, ADP-ribosylated by PARP16 upon ER stress, which increases both kinase and endonuclease activities. Ubiquitously expressed. High levels observed in pancreatic tissue.

The protein resides in the endoplasmic reticulum membrane. It carries out the reaction L-seryl-[protein] + ATP = O-phospho-L-seryl-[protein] + ADP + H(+). The catalysed reaction is L-threonyl-[protein] + ATP = O-phospho-L-threonyl-[protein] + ADP + H(+). The kinase domain is activated by trans-autophosphorylation following homodimerization. Kinase activity is required for activation of the endoribonuclease domain. Endoribonuclease activity is specifically inhibited by hydroxy-aryl-aldehydes (HAA). Its function is as follows. Serine/threonine-protein kinase and endoribonuclease that acts as a key sensor for the endoplasmic reticulum unfolded protein response (UPR). In unstressed cells, the endoplasmic reticulum luminal domain is maintained in its inactive monomeric state by binding to the endoplasmic reticulum chaperone HSPA5/BiP. Accumulation of misfolded proteins in the endoplasmic reticulum causes release of HSPA5/BiP, allowing the luminal domain to homodimerize, promoting autophosphorylation of the kinase domain and subsequent activation of the endoribonuclease activity. The endoribonuclease activity is specific for XBP1 mRNA and excises 26 nucleotides from XBP1 mRNA. The resulting spliced transcript of XBP1 encodes a transcriptional activator protein that up-regulates expression of UPR target genes. Acts as an upstream signal for ER stress-induced GORASP2-mediated unconventional (ER/Golgi-independent) trafficking of CFTR to cell membrane by modulating the expression and localization of SEC16A. This chain is Serine/threonine-protein kinase/endoribonuclease IRE1, found in Homo sapiens (Human).